A 747-amino-acid chain; its full sequence is Probable copper-transporting ATPase PacS (747 aa).

The Cytoplasmic portion of the chain corresponds to 1 to 101 (MVNQQTLTLR…RQLAQRVWVS (101 aa)). One can recognise an HMA domain in the interval 3–69 (NQQTLTLRGM…AIEAAGYHAF (67 aa)). Residues C14 and C17 each contribute to the a metal cation site. A helical transmembrane segment spans residues 102 to 122 (GLIASLLVIGSLPMMLGISIP). Over 123 to 132 (GIPMWLHHPG) the chain is Extracellular. A helical transmembrane segment spans residues 133–151 (LQLGLTLPVLWAGRSFFIN). At 152–158 (AWKAFRQ) the chain is on the cytoplasmic side. The chain crosses the membrane as a helical span at residues 159-179 (NTATMDTLVAVGTGAAFLYSL). At 180 to 199 (AVTLFPQWLTRQGLPPDVYY) the chain is on the extracellular side. Residues 200–220 (EAIAVIIALLLLGRSLEERAK) traverse the membrane as a helical segment. Over 221–348 (GQTSAAIRQL…KAPIQRLADQ (128 aa)) the chain is Cytoplasmic. Residues 349-371 (VTGWFVPAVIAIAILTFVLWFNW) form a helical membrane-spanning segment. Over 372 to 378 (IGNVTLA) the chain is Extracellular. Residues 379–396 (LITAVGVLIIACPCALGL) form a helical membrane-spanning segment. Residues 397 to 688 (ATPTSIMVGT…QLSRATMTNI (292 aa)) lie on the Cytoplasmic side of the membrane. D434 functions as the 4-aspartylphosphate intermediate in the catalytic mechanism. Mg(2+) contacts are provided by D634 and D638. Residues 689–708 (RQNLFFAFIYNVAGIPIAAG) form a helical membrane-spanning segment. Residues 709-720 (ILYPLLGWLLSP) lie on the Extracellular side of the membrane. Residues 721–739 (MLAGAAMAFSSVSVVTNAL) traverse the membrane as a helical segment. The Cytoplasmic portion of the chain corresponds to 740–747 (RLRQFQPR).

Belongs to the cation transport ATPase (P-type) (TC 3.A.3) family. Type IB subfamily.

The protein resides in the cell membrane. It carries out the reaction Cu(+)(in) + ATP + H2O = Cu(+)(out) + ADP + phosphate + H(+). Its function is as follows. May play a role in the osmotic adaptation. The protein is Probable copper-transporting ATPase PacS (pacS) of Synechococcus elongatus (strain ATCC 33912 / PCC 7942 / FACHB-805) (Anacystis nidulans R2).